The primary structure comprises 243 residues: Carboxy-S-adenosyl-L-methionine synthase (243 aa).

S-adenosyl-L-methionine contacts are provided by residues Y40, 65-67 (GCS), 90-91 (DN), 118-119 (DI), N133, and R200.

This sequence belongs to the class I-like SAM-binding methyltransferase superfamily. Cx-SAM synthase family. Homodimer.

It carries out the reaction prephenate + S-adenosyl-L-methionine = carboxy-S-adenosyl-L-methionine + 3-phenylpyruvate + H2O. Functionally, catalyzes the conversion of S-adenosyl-L-methionine (SAM) to carboxy-S-adenosyl-L-methionine (Cx-SAM). This is Carboxy-S-adenosyl-L-methionine synthase from Shewanella baltica (strain OS155 / ATCC BAA-1091).